A 376-amino-acid polypeptide reads, in one-letter code: Glutamate 5-kinase (376 aa).

Lys15 lines the ATP pocket. The substrate site is built by Ser56, Asp143, and Asn155. Residue 175-176 (SD) participates in ATP binding. A PUA domain is found at 281–358 (KGTLTIDAGA…PDVMMILGIT (78 aa)).

The protein belongs to the glutamate 5-kinase family.

Its subcellular location is the cytoplasm. It carries out the reaction L-glutamate + ATP = L-glutamyl 5-phosphate + ADP. It functions in the pathway amino-acid biosynthesis; L-proline biosynthesis; L-glutamate 5-semialdehyde from L-glutamate: step 1/2. Its function is as follows. Catalyzes the transfer of a phosphate group to glutamate to form L-glutamate 5-phosphate. This Rhodopseudomonas palustris (strain ATCC BAA-98 / CGA009) protein is Glutamate 5-kinase.